Here is a 220-residue protein sequence, read N- to C-terminus: Guanylate kinase (220 aa).

A Guanylate kinase-like domain is found at 14 to 194 (GLMVVISSPS…SYAAIKSIIN (181 aa)). 21 to 28 (SPSGAGKS) serves as a coordination point for ATP.

This sequence belongs to the guanylate kinase family.

It is found in the cytoplasm. It catalyses the reaction GMP + ATP = GDP + ADP. Essential for recycling GMP and indirectly, cGMP. The sequence is that of Guanylate kinase from Brucella abortus (strain 2308).